Consider the following 528-residue polypeptide: Galactokinase (528 aa).

Residues R53, E59, H60, and D62 each coordinate alpha-D-galactose. Residues G165, G167, S169, and S170 each coordinate ATP. Alpha-D-galactose-binding residues include N213 and D217. Catalysis depends on D217, which acts as the Proton acceptor. ATP contacts are provided by S264, N265, and K266. Y274 is an alpha-D-galactose binding site. S381 carries the phosphoserine modification.

The protein belongs to the GHMP kinase family. GalK subfamily.

The catalysed reaction is alpha-D-galactose + ATP = alpha-D-galactose 1-phosphate + ADP + H(+). It functions in the pathway carbohydrate metabolism; galactose metabolism. Functionally, galactokinase is a key enzyme in the galactose metabolism where it catalyzes the conversion of alpha-D-galactose to galactose 1-phosphate. Can also induce the transcription of the yeast GAL genes in response to the organism being challenged with galactose as the sole source of carbon. It's striking amino acid sequence similarity to GAL3 might explain its GAL3-like induction activity. The protein is Galactokinase of Saccharomyces cerevisiae (strain ATCC 204508 / S288c) (Baker's yeast).